The primary structure comprises 235 residues: MKYRRVLLKLSGEALMGDREFGIDPEVVKSLAGEIARVVEAGTELAVVVGGGNIFRGVKASSSGMDRATADYVGMLATVMNALTLQDALEQQFQVQTRLLSAIEMKEVAEPFIRRRAMRHLEKGRVVIFGAGSGNPFFTTDTTAALRAAEIDAQVIFKATRVDGIYDSDPKFNPQAVRFEKITFHEVLVQNLRVMDSTAIALCRENNIPILVFNVFEKNSIYRAVQGEAVGTYVC.

9–12 is a binding site for ATP; the sequence is KLSG. Gly-51 provides a ligand contact to UMP. Residues Gly-52 and Arg-56 each coordinate ATP. UMP contacts are provided by residues Asp-71 and 133–140; that span reads SGNPFFTT. ATP-binding residues include Thr-160, Tyr-166, and Asp-169.

It belongs to the UMP kinase family. Homohexamer.

It localises to the cytoplasm. It carries out the reaction UMP + ATP = UDP + ADP. It functions in the pathway pyrimidine metabolism; CTP biosynthesis via de novo pathway; UDP from UMP (UMPK route): step 1/1. Its activity is regulated as follows. Inhibited by UTP. Its function is as follows. Catalyzes the reversible phosphorylation of UMP to UDP. This chain is Uridylate kinase, found in Gloeobacter violaceus (strain ATCC 29082 / PCC 7421).